The sequence spans 432 residues: Adenylosuccinate synthetase (432 aa).

GTP is bound by residues 13 to 19 (GDEGKGK) and 41 to 43 (GHT). Aspartate 14 serves as the catalytic Proton acceptor. Mg(2+)-binding residues include aspartate 14 and glycine 41. IMP contacts are provided by residues 14 to 17 (DEGK), 39 to 42 (NAGH), threonine 131, arginine 145, glutamine 226, threonine 241, and arginine 305. Histidine 42 functions as the Proton donor in the catalytic mechanism. 301–307 (SVTGRAR) is a substrate binding site. Residues arginine 307, 333–335 (KLD), and 416–418 (STG) each bind GTP.

This sequence belongs to the adenylosuccinate synthetase family. As to quaternary structure, homodimer. Requires Mg(2+) as cofactor.

It localises to the cytoplasm. The catalysed reaction is IMP + L-aspartate + GTP = N(6)-(1,2-dicarboxyethyl)-AMP + GDP + phosphate + 2 H(+). The protein operates within purine metabolism; AMP biosynthesis via de novo pathway; AMP from IMP: step 1/2. Functionally, plays an important role in the de novo pathway of purine nucleotide biosynthesis. Catalyzes the first committed step in the biosynthesis of AMP from IMP. This Neisseria gonorrhoeae (strain ATCC 700825 / FA 1090) protein is Adenylosuccinate synthetase.